Here is a 649-residue protein sequence, read N- to C-terminus: Acetyl-coenzyme A synthetase (649 aa).

CoA is bound by residues Arg-190–Arg-193 and Thr-310. ATP-binding positions include Gly-386–Pro-388, Asp-410–Thr-415, Asp-499, and Arg-514. Ser-522 is a CoA binding site. Arg-525 contacts ATP. Positions 536, 538, and 541 each coordinate Mg(2+). Arg-583 is a binding site for CoA. At Lys-608 the chain carries N6-acetyllysine.

Belongs to the ATP-dependent AMP-binding enzyme family. It depends on Mg(2+) as a cofactor. Acetylated. Deacetylation by the SIR2-homolog deacetylase activates the enzyme.

It catalyses the reaction acetate + ATP + CoA = acetyl-CoA + AMP + diphosphate. Functionally, catalyzes the conversion of acetate into acetyl-CoA (AcCoA), an essential intermediate at the junction of anabolic and catabolic pathways. AcsA undergoes a two-step reaction. In the first half reaction, AcsA combines acetate with ATP to form acetyl-adenylate (AcAMP) intermediate. In the second half reaction, it can then transfer the acetyl group from AcAMP to the sulfhydryl group of CoA, forming the product AcCoA. The sequence is that of Acetyl-coenzyme A synthetase from Methylorubrum populi (strain ATCC BAA-705 / NCIMB 13946 / BJ001) (Methylobacterium populi).